An 85-amino-acid polypeptide reads, in one-letter code: MKLLLLLTISASMLIEGLVNADGYIRGGDGCKVSCVINHVFCDNECKAAGGSYGYCWGWGLACWCEGLPAEREWDYETDTCGGKK.

A signal peptide spans 1–21 (MKLLLLLTISASMLIEGLVNA). One can recognise an LCN-type CS-alpha/beta domain in the interval 22–82 (DGYIRGGDGC…EWDYETDTCG (61 aa)). Cystine bridges form between cysteine 31–cysteine 81, cysteine 35–cysteine 56, cysteine 42–cysteine 63, and cysteine 46–cysteine 65. Glycine amide is present on glycine 82.

Belongs to the long (4 C-C) scorpion toxin superfamily. Sodium channel inhibitor family. Beta subfamily. Expressed by the venom gland.

It is found in the secreted. Depressant insect beta-toxins cause a transient contraction paralysis followed by a slow flaccid paralysis. They bind voltage-independently at site-4 of sodium channels (Nav) and block action potentials, primarily by depolarizing the axonal membrane and suppressing the sodium current. This depressant toxin is active only on insects. It is found in a relatively small amount in the venom. In Leiurus hebraeus (Hebrew deathstalker scorpion), this protein is Beta-insect depressant toxin Lqh-dprIT3g.